The primary structure comprises 430 residues: Alpha-1,6-mannosyl-glycoprotein 2-beta-N-acetylglucosaminyltransferase (430 aa).

Residues 1-12 (MANLWKKQRLRD) lie on the Cytoplasmic side of the membrane. Residues 13-35 (TGLCRLGILFAVTLSIVLMLVSV) traverse the membrane as a helical; Signal-anchor for type II membrane protein segment. Topologically, residues 36–430 (PRTALNGSSI…YRYSSSSASP (395 aa)) are lumenal. Asparagine 41 and asparagine 61 each carry an N-linked (GlcNAc...) asparagine glycan. Substrate-binding positions include 104–108 (YVHNR) and aspartate 135. Cysteine 177 and cysteine 188 are joined by a disulfide. 205–209 (SLKHH) is a substrate binding site. Aspartate 237 lines the Mn(2+) pocket. An intrachain disulfide couples cysteine 259 to cysteine 262. N-linked (GlcNAc...) asparagine glycosylation occurs at asparagine 295. Cysteines 310 and 414 form a disulfide. Residue histidine 345 coordinates Mn(2+).

It belongs to the glycosyltransferase 16 (GT16) protein family. Requires Mn(2+) as cofactor.

It is found in the golgi apparatus membrane. The catalysed reaction is an N(4)-{beta-D-GlcNAc-(1-&gt;2)-alpha-D-Man-(1-&gt;3)-[alpha-D-Man-(1-&gt;6)]-beta-D-Man-(1-&gt;4)-beta-D-GlcNAc-(1-&gt;4)-beta-D-GlcNAc}-L-asparaginyl-[protein] + UDP-N-acetyl-alpha-D-glucosamine = N(4)-{beta-D-GlcNAc-(1-&gt;2)-alpha-D-Man-(1-&gt;3)-[beta-D-GlcNAc-(1-&gt;2)-alpha-D-Man-(1-&gt;6)]-beta-D-Man-(1-&gt;4)-beta-D-GlcNAc-(1-&gt;4)-beta-D-GlcNAc}-L-asparaginyl-[protein] + UDP + H(+). Its pathway is protein modification; protein glycosylation. Functionally, catalyzes an essential step in the conversion of oligo-mannose and hybrid to complex N-glycans. The polypeptide is Alpha-1,6-mannosyl-glycoprotein 2-beta-N-acetylglucosaminyltransferase (Arabidopsis thaliana (Mouse-ear cress)).